Consider the following 250-residue polypeptide: Troponin I 1 (250 aa).

Disordered regions lie at residues M1 to K59 and S194 to E250. 2 stretches are compositionally biased toward basic and acidic residues: residues D21–Q45 and D206–S221. Residues P229–E250 show a composition bias toward acidic residues.

It belongs to the troponin I family. As to expression, strongly expressed in body wall muscle during embryogenesis, reduces during the larval stages to adult. In late-stage larvae and adults, expression is evident in the proximal gonad of both hermaphrodites and males.

Its function is as follows. Troponin I is the inhibitory subunit of troponin, the thin filament regulatory complex which confers calcium-sensitivity to muscle actomyosin ATPase activity. This Caenorhabditis elegans protein is Troponin I 1 (tni-1).